Consider the following 875-residue polypeptide: Aminopeptidase M1-B (875 aa).

The required for membrane association stretch occupies residues 96-203 (IGEGVLKMDF…MSTYLVAIVV (108 aa)). Residues Glu-136 and 269–273 (GAMEN) contribute to the substrate site. Zn(2+) is bound at residue His-305. Glu-306 (proton acceptor) is an active-site residue. 2 residues coordinate Zn(2+): His-309 and Glu-328. The Dileucine internalization motif signature appears at 722–723 (LL).

This sequence belongs to the peptidase M1 family. In terms of assembly, homodimer. The cofactor is Zn(2+).

It is found in the membrane. Its subcellular location is the microsome membrane. The protein localises to the cytoplasm. The enzyme catalyses Release of an N-terminal amino acid, Xaa-|-Yaa- from a peptide, amide or arylamide. Xaa is preferably Ala, but may be most amino acids including Pro (slow action). When a terminal hydrophobic residue is followed by a prolyl residue, the two may be released as an intact Xaa-Pro dipeptide.. The sequence is that of Aminopeptidase M1-B from Oryza sativa subsp. japonica (Rice).